The chain runs to 205 residues: MLSVILKSSIRGLGKAGEVAKVRPGYARYLLADGKAMRATKRNMELLAEKLAVMEEESNQKLREAEKVAEALAGECFVMIRQASDDGKLFGSVAVRDVAKLLGSLGYNVQPKEVFFSEVIKRIGEYEINVELHADLVAVVKLYVVRNEAEAERTRLQVARDRKSRNAAAASEVQDAPVEDGGDEVVSVDSVAAEDGGADASGGTA.

The disordered stretch occupies residues 160–205 (RDRKSRNAAAASEVQDAPVEDGGDEVVSVDSVAAEDGGADASGGTA). Positions 184 to 195 (EVVSVDSVAAED) are enriched in low complexity.

Belongs to the bacterial ribosomal protein bL9 family.

Its function is as follows. Binds to the 23S rRNA. In Anaplasma phagocytophilum (strain HZ), this protein is Large ribosomal subunit protein bL9.